A 432-amino-acid chain; its full sequence is Adenosylhomocysteinase (432 aa).

The residue at position 2 (S2) is an N-acetylserine. Residues T57, D131, and E156 each contribute to the substrate site. S183 carries the post-translational modification Phosphoserine. Positions 183–350 (SVTKSKFDNL…EGRLVNLGCA (168 aa)) are NAD binding. Residues K186 and D190 each coordinate substrate. At K186 the chain carries N6-(2-hydroxyisobutyryl)lysine. Position 193 is a phosphotyrosine (Y193).

Belongs to the adenosylhomocysteinase family. As to quaternary structure, homotetramer. Interaction with AHCYL1. Requires NAD(+) as cofactor.

The protein localises to the cytoplasm. It localises to the melanosome. The protein resides in the nucleus. Its subcellular location is the endoplasmic reticulum. The enzyme catalyses S-adenosyl-L-homocysteine + H2O = L-homocysteine + adenosine. It functions in the pathway amino-acid biosynthesis; L-homocysteine biosynthesis; L-homocysteine from S-adenosyl-L-homocysteine: step 1/1. Its function is as follows. Catalyzes the hydrolysis of S-adenosyl-L-homocysteine to form adenosine and homocysteine. Binds copper ions. This Bos taurus (Bovine) protein is Adenosylhomocysteinase (AHCY).